The primary structure comprises 1057 residues: Carbamoyl phosphate synthase large chain (1057 aa).

Residues 1-401 (MPKRNDIKTI…SLLKAIRSLE (401 aa)) form a carboxyphosphate synthetic domain region. Residues R129, R169, G175, G176, K208, I210, E215, G241, I242, H243, Q284, and E298 each coordinate ATP. One can recognise an ATP-grasp 1 domain in the interval 133–327 (RTLMNDLNVP…IAKLAAKIAV (195 aa)). Residues Q284, E298, and N300 each coordinate Mg(2+). The Mn(2+) site is built by Q284, E298, and N300. The segment at 402 to 546 (YGVHHLGLPN…YGTYETENES (145 aa)) is oligomerization domain. Positions 547 to 929 (IVTDKEKILV…ALFKGLTGSG (383 aa)) are carbamoyl phosphate synthetic domain. The region spanning 671–861 (EALLRKINVP…MAQLAMRAII (191 aa)) is the ATP-grasp 2 domain. ATP-binding residues include R707, R746, L748, E752, G777, V778, H779, S780, Q820, and E832. Mg(2+) is bound by residues Q820, E832, and N834. Mn(2+) contacts are provided by Q820, E832, and N834. The 128-residue stretch at 930–1057 (VEVKDHGTVL…ESMTFTMRQM (128 aa)) folds into the MGS-like domain. The interval 930–1057 (VEVKDHGTVL…ESMTFTMRQM (128 aa)) is allosteric domain.

Belongs to the CarB family. Composed of two chains; the small (or glutamine) chain promotes the hydrolysis of glutamine to ammonia, which is used by the large (or ammonia) chain to synthesize carbamoyl phosphate. Tetramer of heterodimers (alpha,beta)4. The cofactor is Mg(2+). It depends on Mn(2+) as a cofactor.

The enzyme catalyses hydrogencarbonate + L-glutamine + 2 ATP + H2O = carbamoyl phosphate + L-glutamate + 2 ADP + phosphate + 2 H(+). It carries out the reaction hydrogencarbonate + NH4(+) + 2 ATP = carbamoyl phosphate + 2 ADP + phosphate + 2 H(+). It functions in the pathway amino-acid biosynthesis; L-arginine biosynthesis; carbamoyl phosphate from bicarbonate: step 1/1. The protein operates within pyrimidine metabolism; UMP biosynthesis via de novo pathway; (S)-dihydroorotate from bicarbonate: step 1/3. Functionally, large subunit of the glutamine-dependent carbamoyl phosphate synthetase (CPSase). CPSase catalyzes the formation of carbamoyl phosphate from the ammonia moiety of glutamine, carbonate, and phosphate donated by ATP, constituting the first step of 2 biosynthetic pathways, one leading to arginine and/or urea and the other to pyrimidine nucleotides. The large subunit (synthetase) binds the substrates ammonia (free or transferred from glutamine from the small subunit), hydrogencarbonate and ATP and carries out an ATP-coupled ligase reaction, activating hydrogencarbonate by forming carboxy phosphate which reacts with ammonia to form carbamoyl phosphate. This Staphylococcus aureus (strain USA300 / TCH1516) protein is Carbamoyl phosphate synthase large chain.